Consider the following 118-residue polypeptide: Large ribosomal subunit protein uL24 (118 aa).

The protein belongs to the universal ribosomal protein uL24 family. In terms of assembly, part of the 50S ribosomal subunit.

In terms of biological role, one of two assembly initiator proteins, it binds directly to the 5'-end of the 23S rRNA, where it nucleates assembly of the 50S subunit. Functionally, one of the proteins that surrounds the polypeptide exit tunnel on the outside of the subunit. This Prochlorococcus marinus (strain NATL2A) protein is Large ribosomal subunit protein uL24.